The sequence spans 93 residues: Large ribosomal subunit protein uL23cz/uL23cy (93 aa).

Belongs to the universal ribosomal protein uL23 family. Part of the 50S ribosomal subunit.

It is found in the plastid. It localises to the chloroplast. In terms of biological role, binds to 23S rRNA. The protein is Large ribosomal subunit protein uL23cz/uL23cy (rpl23-A) of Nymphaea alba (White water-lily).